A 529-amino-acid chain; its full sequence is Cytochrome P450 monooxygenase acuD (529 aa).

Residues 8 to 28 (FAVIAASAAAVAGVLFLIYAA) traverse the membrane as a helical segment. N81 is a glycosylation site (N-linked (GlcNAc...) asparagine). C449 is a heme binding site.

The protein belongs to the cytochrome P450 family. Heme is required as a cofactor.

The protein localises to the endoplasmic reticulum membrane. The enzyme catalyses 3-hydroxybenzyl alcohol + reduced [NADPH--hemoprotein reductase] + O2 = gentisyl alcohol + oxidized [NADPH--hemoprotein reductase] + H2O + H(+). Its pathway is secondary metabolite biosynthesis. In terms of biological role, cytochrome P450 monooxygenase; part of the gene cluster that mediates the biosynthesis of aculins. The pathway begins with the synthesis of 6-methylsalicylic acid by the polyketide synthase (PKS) acuA via condensation of acetate and malonate units. The 6-methylsalicylic acid decarboxylase acuB then catalyzes the decarboxylation of 6-methylsalicylic acid to yield m-cresol (also known as 3-methylphenol). These first reactions occur in the cytosol. The intermediate m-cresol is then transported into the endoplasmic reticulum where the cytochrome P450 monooxygenase acuC converts it to m-hydroxybenzyl alcohol, which is further converted to gentisyl alcohol by the cytochrome P450 monooxygenase acuD. Gentisyl alcohol is further oxidized by the oxidoreductase acuE that probably catalyzes hydroxylation of the aromatic ring. The aromatic system might then be opened by oxidation through a Baeyer-Villiger type of oxidation, which could be catalyzed by acuF, with the carboxylic acid at C-1 subsequently reduced to an aldehyde by acuG. Subsequently, a hemiacetal is formed, before the dehydrogenase acuH would reduce the double bond between C-4 and C-6. Finally, keto-enol tautomerism results in formation of aculinic acid, which exists as two diastereomers (both R/S configurations at C-1) by non-enzymatic hemiacetal formation. The carboxypeptidase acuI could be involved in the linking of aculinic acid to an aculene A moiety produced by the aculene biosynthesis cluster and which leads to the production of aculin A. AcuI may also be involved in the attachment of proline to aculinic acid to form epi-aculins A and B. This is Cytochrome P450 monooxygenase acuD from Aspergillus aculeatus (strain ATCC 16872 / CBS 172.66 / WB 5094).